A 357-amino-acid polypeptide reads, in one-letter code: Chorismate synthase (357 aa).

Arg47 contacts NADP(+). FMN-binding positions include 123-125, Gly281, 296-300, and Arg324; these read RAS and KPTSS.

This sequence belongs to the chorismate synthase family. As to quaternary structure, homotetramer. Requires FMNH2 as cofactor.

The catalysed reaction is 5-O-(1-carboxyvinyl)-3-phosphoshikimate = chorismate + phosphate. It functions in the pathway metabolic intermediate biosynthesis; chorismate biosynthesis; chorismate from D-erythrose 4-phosphate and phosphoenolpyruvate: step 7/7. Its function is as follows. Catalyzes the anti-1,4-elimination of the C-3 phosphate and the C-6 proR hydrogen from 5-enolpyruvylshikimate-3-phosphate (EPSP) to yield chorismate, which is the branch point compound that serves as the starting substrate for the three terminal pathways of aromatic amino acid biosynthesis. This reaction introduces a second double bond into the aromatic ring system. In Chlamydia trachomatis serovar D (strain ATCC VR-885 / DSM 19411 / UW-3/Cx), this protein is Chorismate synthase.